Consider the following 466-residue polypeptide: MSSTQVGNALSSSTTTLVDLSNSTVTQKKQYYKDGETLHNLLLELKNNQDLELLPHEQAHPKIFQALKARIGRINNETCDPGEENSFFICDLGEVKRLFNNWVKELPRIKPFYAVKCNPDTKVLSLLAELGVNFDCASKVEIDRVLSMNISPDRIVYANPCKVASFIRYAASKNVMKSTFDNVEELHKIKKFHPESQLLLRIATDDSTAQCRLSTKYGCEMENVDVLLKAIKELGLNLAGVSFHVGSGASDFTSLYKAVRDARTVFDKAANEYGLPPLKILDVGGGFQFESFKESTAVLRLALEEFFPVGCGVDIIAEPGRYFVATAFTLASHVIAKRKLSENEAMIYTNDGVYGNMNCILFDHQEPHPRTLYHNLEFHYDDFESTTAVLDSINKTRSEYPYKVSIWGPTCDGLDCIAKEYYMKHDVIVGDWFYFPALGAYTSSAATQFNGFEQTADIVYIDSELD.

N6-(pyridoxal phosphate)lysine is present on Lys116. Pyridoxal 5'-phosphate-binding positions include Ser247, Gly286, and 318 to 321 (EPGR). 362-363 (FD) provides a ligand contact to substrate. Cys411 (proton donor; shared with dimeric partner) is an active-site residue. Residue Asp412 coordinates substrate. Residue Tyr441 participates in pyridoxal 5'-phosphate binding.

The protein belongs to the Orn/Lys/Arg decarboxylase class-II family. In terms of assembly, homodimer. Only the dimer is catalytically active, as the active sites are constructed of residues from both monomers. The cofactor is pyridoxal 5'-phosphate.

It is found in the cytoplasm. It carries out the reaction L-ornithine + H(+) = putrescine + CO2. Its pathway is amine and polyamine biosynthesis; putrescine biosynthesis via L-ornithine pathway; putrescine from L-ornithine: step 1/1. Its activity is regulated as follows. Inhibited by antizyme (AZ) OAZ1 in response to polyamine levels. AZ inhibits the assembly of the functional homodimer by binding to ODC monomers and targeting them for ubiquitin-independent proteolytic destruction by the 26S proteasome. Functionally, catalyzes the first and rate-limiting step of polyamine biosynthesis that converts ornithine into putrescine, which is the precursor for the polyamines, spermidine and spermine. Polyamines are essential for cell proliferation and are implicated in cellular processes, ranging from DNA replication to apoptosis. This chain is Ornithine decarboxylase, found in Saccharomyces cerevisiae (strain ATCC 204508 / S288c) (Baker's yeast).